The chain runs to 227 residues: 2-phospho-L-lactate guanylyltransferase (227 aa).

The protein belongs to the CofC family. Homodimer.

It catalyses the reaction (2S)-2-phospholactate + GTP + H(+) = (2S)-lactyl-2-diphospho-5'-guanosine + diphosphate. The protein operates within cofactor biosynthesis; coenzyme F420 biosynthesis. In terms of biological role, guanylyltransferase that catalyzes the activation of (2S)-2-phospholactate (2-PL) as (2S)-lactyl-2-diphospho-5'-guanosine, via the condensation of 2-PL with GTP. It is involved in the biosynthesis of coenzyme F420, a hydride carrier cofactor. The polypeptide is 2-phospho-L-lactate guanylyltransferase (Methanocaldococcus sp. (strain FS406-22)).